The chain runs to 529 residues: AT hook-containing protein attf-4 (529 aa).

Disordered stretches follow at residues 1-39 (MLQPPTLTPNANGEEFRGSVSTDRSSASPSNIDEIMEDD), 131-158 (QVVHKDQQNGSSFLPSANKTSENPKPIE), 173-200 (GGGGGKIHTERLSEPARKQSRKVGFPPP), and 233-255 (VSANTSTASPGPSSEGSGDDHLE). Composition is skewed to polar residues over residues 19–31 (SVSTDRSSASPSN) and 138–153 (QNGSSFLPSANKTSEN). Positions 179–189 (IHTERLSEPAR) are enriched in basic and acidic residues. Over residues 233–248 (VSANTSTASPGPSSEG) the composition is skewed to low complexity. A DNA-binding region (a.T hook) is located at residues 307 to 319 (GRGRGRPKLIGDE). Positions 436 to 476 (LEGGSPPASSSSTATTSTATKTVKQESKNGHQNEENLNVKQ) are disordered. A compositionally biased stretch (low complexity) spans 443 to 455 (ASSSSTATTSTAT). Positions 458–469 (VKQESKNGHQNE) are enriched in basic and acidic residues.

This chain is AT hook-containing protein attf-4, found in Caenorhabditis elegans.